The primary structure comprises 604 residues: Dopamine receptor 3 (604 aa).

Over 1-23 the chain is Extracellular; sequence MLTGQHHIPGIESPLMVVLWRVA. Residues 24–44 form a helical membrane-spanning segment; the sequence is AGVFLPLVPTMAVFGNVLVIL. The Cytoplasmic segment spans residues 45–58; that stretch reads SVYRERNLQTVTNM. The helical transmembrane segment at 59-79 threads the bilayer; sequence LIVSLAVSDLFVAIGVMSFGV. Topologically, residues 80 to 96 are extracellular; it reads YYEWNGFKWGLGSFFCH. Cysteines 95 and 170 form a disulfide. A helical membrane pass occupies residues 97–117; it reads VYQALDVACSTASILNLLAIS. Residues 118-141 are Cytoplasmic-facing; the sequence is LDRYIAIGHPISYAQYGARGGRAM. A helical membrane pass occupies residues 142-162; sequence ISITIVWGVSCAVALPLLLGV. Over 163–179 the chain is Extracellular; it reads NPMENDQCELANPWFNM. Residues 180–200 form a helical membrane-spanning segment; the sequence is ISSIFSFFIPCIAMIILYTII. At 201–520 the chain is on the cytoplasmic side; the sequence is FRRLRQRERA…TKQMRREHKA (320 aa). The interval 399 to 430 is disordered; it reads SIQDEKKMNSRPPENPFAHQNGTNKQRLLPNP. Residues 521-541 traverse the membrane as a helical segment; the sequence is TVTLAVVLAVFLFCWLPFFIL. Residues 542–559 lie on the Extracellular side of the membrane; it reads HLSNSICLVIDSNSDCIG. A helical membrane pass occupies residues 560–580; it reads FLPLYLATWLGYLNSSLNPLI. Residues 581–604 are Cytoplasmic-facing; sequence YTVFDQRFRNAFRNILSCGFFKKR.

Belongs to the G-protein coupled receptor 1 family.

It localises to the cell membrane. In terms of biological role, receptor for dopamine. The activity of this receptor is mediated by G proteins which activate adenylyl cyclase. In terms of antagonist responses, would be classed with the D2-like dopamine receptor group. Mediates the effect of dopamine on the inhibition of locomotion. Acts as an antagonist of dop-1. This Caenorhabditis briggsae protein is Dopamine receptor 3.